The sequence spans 550 residues: Glucose-6-phosphate isomerase 1 (550 aa).

Glu355 functions as the Proton donor in the catalytic mechanism. Catalysis depends on residues His386 and Lys512.

This sequence belongs to the GPI family.

The protein resides in the cytoplasm. The catalysed reaction is alpha-D-glucose 6-phosphate = beta-D-fructose 6-phosphate. Its pathway is carbohydrate biosynthesis; gluconeogenesis. It participates in carbohydrate degradation; glycolysis; D-glyceraldehyde 3-phosphate and glycerone phosphate from D-glucose: step 2/4. Functionally, catalyzes the reversible isomerization of glucose-6-phosphate to fructose-6-phosphate. The chain is Glucose-6-phosphate isomerase 1 from Rhodococcus jostii (strain RHA1).